A 103-amino-acid polypeptide reads, in one-letter code: Ribonuclease VapC14 (103 aa).

Residues 3-74 (YVLDTNVVSA…WFDDKVLRIF (72 aa)) form the PINc domain. A Mg(2+)-binding site is contributed by D6.

This sequence belongs to the PINc/VapC protein family. Requires Mg(2+) as cofactor.

Functionally, toxic component of a type II toxin-antitoxin (TA) system. An RNase. The cognate antitoxin is VapB14. This Mycobacterium tuberculosis (strain CDC 1551 / Oshkosh) protein is Ribonuclease VapC14 (vapC14).